Reading from the N-terminus, the 95-residue chain is MICTVYKSRRKLDTYLFVEKRDDFSSVPEALMTMFGPPQLVMLVPLSKRTSLAMADIEKVRSELKDKGYYLQLPPPKANLLEEHKLSLGIDKYAP.

Residues 1 to 85 form the YcgL domain; that stretch reads MICTVYKSRR…PKANLLEEHK (85 aa).

The sequence is that of YcgL domain-containing protein Sden_1630 from Shewanella denitrificans (strain OS217 / ATCC BAA-1090 / DSM 15013).